We begin with the raw amino-acid sequence, 425 residues long: Polyribonucleotide 5'-hydroxyl-kinase Clp1 (425 aa).

Residues glutamate 22, lysine 62, and 124-129 each bind ATP; that span reads DVGKST.

Belongs to the Clp1 family. Clp1 subfamily. In terms of assembly, component of the tRNA splicing endonuclease complex, composed of CLP1, TSEN2, TSEN15, TSEN34 and TSEN54. Component of pre-mRNA cleavage complex II (CF-II). Also associates with numerous components of the pre-mRNA cleavage complex I (CF-I/CFIm), including NUDT21, CPSF2, CPSF3, CPSF6 and CPSF7. Interacts with CSTF2 and SYMPK. Mg(2+) is required as a cofactor. The cofactor is Mn(2+). It depends on Ni(2+) as a cofactor.

Its subcellular location is the nucleus. The enzyme catalyses a 5'-end dephospho-2'-deoxyribonucleoside-DNA + ATP = a 5'-end 5'-phospho-2'-deoxyribonucleoside-DNA + ADP + H(+). It catalyses the reaction a 5'-end dephospho-ribonucleoside-RNA + ATP = a 5'-end 5'-phospho-ribonucleoside-RNA + ADP + H(+). Polynucleotide kinase that can phosphorylate the 5'-hydroxyl groups of double-stranded RNA (dsRNA), single-stranded RNA (ssRNA), double-stranded DNA (dsDNA) and double-stranded DNA:RNA hybrids. dsRNA is phosphorylated more efficiently than dsDNA, and the RNA component of a DNA:RNA hybrid is phosphorylated more efficiently than the DNA component. Plays a key role in both tRNA splicing and mRNA 3'-end formation. Component of the tRNA splicing endonuclease complex: phosphorylates the 5'-terminus of the tRNA 3'-exon during tRNA splicing; this phosphorylation event is a prerequisite for the subsequent ligation of the two exon halves and the production of a mature tRNA. Its role in tRNA splicing and maturation is required for cerebellar development. Component of the pre-mRNA cleavage complex II (CF-II), which seems to be required for mRNA 3'-end formation. Also phosphorylates the 5'-terminus of exogenously introduced short interfering RNAs (siRNAs), which is a necessary prerequisite for their incorporation into the RNA-induced silencing complex (RISC). However, endogenous siRNAs and microRNAs (miRNAs) that are produced by the cleavage of dsRNA precursors by DICER1 already contain a 5'-phosphate group, so this protein may be dispensible for normal RNA-mediated gene silencing. This Homo sapiens (Human) protein is Polyribonucleotide 5'-hydroxyl-kinase Clp1.